The chain runs to 428 residues: Adenylosuccinate synthetase (428 aa).

GTP-binding positions include 12–18 (GDEGKGK) and 40–42 (GHT). Asp13 serves as the catalytic Proton acceptor. Residues Asp13 and Gly40 each coordinate Mg(2+). IMP is bound by residues 13 to 16 (DEGK), 38 to 41 (NAGH), Thr130, Arg144, Gln225, Thr240, and Arg304. The active-site Proton donor is His41. 300 to 306 (VTTGRSR) contributes to the substrate binding site. Residues Arg306, 332-334 (KID), and 414-416 (GVG) contribute to the GTP site.

Belongs to the adenylosuccinate synthetase family. As to quaternary structure, homodimer. Mg(2+) serves as cofactor.

It localises to the cytoplasm. The enzyme catalyses IMP + L-aspartate + GTP = N(6)-(1,2-dicarboxyethyl)-AMP + GDP + phosphate + 2 H(+). It functions in the pathway purine metabolism; AMP biosynthesis via de novo pathway; AMP from IMP: step 1/2. Functionally, plays an important role in the de novo pathway of purine nucleotide biosynthesis. Catalyzes the first committed step in the biosynthesis of AMP from IMP. The polypeptide is Adenylosuccinate synthetase (Clostridium botulinum (strain Eklund 17B / Type B)).